The sequence spans 109 residues: Large ribosomal subunit protein uL22 (109 aa).

It belongs to the universal ribosomal protein uL22 family. In terms of assembly, part of the 50S ribosomal subunit.

Functionally, this protein binds specifically to 23S rRNA; its binding is stimulated by other ribosomal proteins, e.g. L4, L17, and L20. It is important during the early stages of 50S assembly. It makes multiple contacts with different domains of the 23S rRNA in the assembled 50S subunit and ribosome. The globular domain of the protein is located near the polypeptide exit tunnel on the outside of the subunit, while an extended beta-hairpin is found that lines the wall of the exit tunnel in the center of the 70S ribosome. The polypeptide is Large ribosomal subunit protein uL22 (Polaromonas sp. (strain JS666 / ATCC BAA-500)).